The following is a 261-amino-acid chain: Undecaprenyl-diphosphatase (261 aa).

The next 8 helical transmembrane spans lie at 1–21, 41–61, 69–89, 95–115, 129–149, 169–186, 206–226, and 241–261; these read MNYI…FLPV, FTKL…VVLY, LDFY…GLLF, ALLE…IILL, ITYL…IPGV, AAEF…GATL, ILII…KTFI, and RIVA…LTLI.

The protein belongs to the UppP family.

It is found in the cell inner membrane. It catalyses the reaction di-trans,octa-cis-undecaprenyl diphosphate + H2O = di-trans,octa-cis-undecaprenyl phosphate + phosphate + H(+). Catalyzes the dephosphorylation of undecaprenyl diphosphate (UPP). Confers resistance to bacitracin. This chain is Undecaprenyl-diphosphatase, found in Flavobacterium psychrophilum (strain ATCC 49511 / DSM 21280 / CIP 103535 / JIP02/86).